The following is a 396-amino-acid chain: Elongation factor Tu (396 aa).

In terms of domain architecture, tr-type G spans 10–206 (KPHVNIGTIG…AVDESVPDPV (197 aa)). The G1 stretch occupies residues 19 to 26 (GHVDHGKT). A GTP-binding site is contributed by 19-26 (GHVDHGKT). Thr26 is a binding site for Mg(2+). Positions 62 to 66 (GITIN) are G2. The segment at 83-86 (DAPG) is G3. Residues 83 to 87 (DAPGH) and 138 to 141 (NKSD) contribute to the GTP site. The interval 138–141 (NKSD) is G4. The G5 stretch occupies residues 176-178 (SGL).

The protein belongs to the TRAFAC class translation factor GTPase superfamily. Classic translation factor GTPase family. EF-Tu/EF-1A subfamily. Monomer.

It is found in the cytoplasm. It catalyses the reaction GTP + H2O = GDP + phosphate + H(+). In terms of biological role, GTP hydrolase that promotes the GTP-dependent binding of aminoacyl-tRNA to the A-site of ribosomes during protein biosynthesis. This Paenarthrobacter aurescens (strain TC1) protein is Elongation factor Tu.